Here is a 529-residue protein sequence, read N- to C-terminus: GTPase Obg (529 aa).

An Obg domain is found at 2–159 (ASFVDRVVLH…SDIVLELKSI (158 aa)). The 184-residue stretch at 160–343 (ADIALVGFPS…LGFAMAEIVK (184 aa)) folds into the OBG-type G domain. GTP-binding positions include 166 to 173 (GFPSAGKS), 191 to 195 (FTTLI), 212 to 215 (DVPG), 295 to 298 (NKVD), and 324 to 326 (SAT). Residues serine 173 and threonine 193 each contribute to the Mg(2+) site. Residues 363–447 (PRAVNEAGFK…DDGVVFDWEP (85 aa)) form the OCT domain. Positions 466–502 (FADIGDRPTRGQKRDEQQERRDAKAAARAELEAERKA) are enriched in basic and acidic residues. The interval 466 to 529 (FADIGDRPTR…ESGLTTENEE (64 aa)) is disordered.

It belongs to the TRAFAC class OBG-HflX-like GTPase superfamily. OBG GTPase family. In terms of assembly, monomer. Mg(2+) serves as cofactor.

It localises to the cytoplasm. In terms of biological role, an essential GTPase which binds GTP, GDP and possibly (p)ppGpp with moderate affinity, with high nucleotide exchange rates and a fairly low GTP hydrolysis rate. Plays a role in control of the cell cycle, stress response, ribosome biogenesis and in those bacteria that undergo differentiation, in morphogenesis control. In Arthrobacter sp. (strain FB24), this protein is GTPase Obg.